The chain runs to 297 residues: Probable endonuclease 4 (297 aa).

Zn(2+)-binding residues include H69, H110, E145, D179, H182, H214, D227, H229, and E259.

It belongs to the AP endonuclease 2 family. Zn(2+) serves as cofactor.

It carries out the reaction Endonucleolytic cleavage to 5'-phosphooligonucleotide end-products.. Functionally, endonuclease IV plays a role in DNA repair. It cleaves phosphodiester bonds at apurinic or apyrimidinic (AP) sites, generating a 3'-hydroxyl group and a 5'-terminal sugar phosphate. This is Probable endonuclease 4 from Bacillus velezensis (strain DSM 23117 / BGSC 10A6 / LMG 26770 / FZB42) (Bacillus amyloliquefaciens subsp. plantarum).